The primary structure comprises 267 residues: Phosphate import ATP-binding protein PstB 1 (267 aa).

In terms of domain architecture, ABC transporter spans 21–262; sequence LETKDLHVYY…AALQSTSDYV (242 aa). 53-60 contributes to the ATP binding site; sequence GPSGCGKS.

It belongs to the ABC transporter superfamily. Phosphate importer (TC 3.A.1.7) family. As to quaternary structure, the complex is composed of two ATP-binding proteins (PstB), two transmembrane proteins (PstC and PstA) and a solute-binding protein (PstS).

It localises to the cell membrane. The enzyme catalyses phosphate(out) + ATP + H2O = ADP + 2 phosphate(in) + H(+). Its function is as follows. Part of the ABC transporter complex PstSACB involved in phosphate import. Responsible for energy coupling to the transport system. The chain is Phosphate import ATP-binding protein PstB 1 from Streptococcus thermophilus (strain CNRZ 1066).